The chain runs to 361 residues: Peptide chain release factor 1 (361 aa).

At Q236 the chain carries N5-methylglutamine.

It belongs to the prokaryotic/mitochondrial release factor family. Methylated by PrmC. Methylation increases the termination efficiency of RF1.

It is found in the cytoplasm. In terms of biological role, peptide chain release factor 1 directs the termination of translation in response to the peptide chain termination codons UAG and UAA. This is Peptide chain release factor 1 from Levilactobacillus brevis (strain ATCC 367 / BCRC 12310 / CIP 105137 / JCM 1170 / LMG 11437 / NCIMB 947 / NCTC 947) (Lactobacillus brevis).